Here is a 279-residue protein sequence, read N- to C-terminus: Cholesterol 25-hydroxylase-like protein 2 (279 aa).

N-linked (GlcNAc...) asparagine glycans are attached at residues asparagine 6 and asparagine 13. The next 3 membrane-spanning stretches occupy residues 36 to 56 (LFPVILSVSMYLVLVFFYTVL), 86 to 106 (LALTTYNHLLYIFPAAVAQWL), and 120 to 140 (LTAFLLGIVGCTVVFDFQYYL). A Fatty acid hydroxylase domain is found at 128–262 (VGCTVVFDFQ…FAHWDWLGGT (135 aa)). Residues 141-145 (WHLLH) carry the Histidine box-1 motif. Positions 156–160 (HALHH) match the Histidine box-2 motif. 2 consecutive transmembrane segments span residues 165-185 (TFSLVTQYLSAWELFSVGFWT) and 189-209 (PLLLQCHCLTAWAFMLFNIWV). Residues 237 to 243 (RHDAHHQ) carry the Histidine box-3 motif.

Belongs to the sterol desaturase family. Fe cation is required as a cofactor.

The protein resides in the endoplasmic reticulum membrane. Its function is as follows. May catalyze the formation of 25-hydroxycholesterol from cholesterol. The sequence is that of Cholesterol 25-hydroxylase-like protein 2 from Danio rerio (Zebrafish).